Reading from the N-terminus, the 179-residue chain is Large ribosomal subunit protein uL6 (179 aa).

The protein belongs to the universal ribosomal protein uL6 family. In terms of assembly, part of the 50S ribosomal subunit.

Its function is as follows. This protein binds to the 23S rRNA, and is important in its secondary structure. It is located near the subunit interface in the base of the L7/L12 stalk, and near the tRNA binding site of the peptidyltransferase center. The protein is Large ribosomal subunit protein uL6 of Chlorobaculum tepidum (strain ATCC 49652 / DSM 12025 / NBRC 103806 / TLS) (Chlorobium tepidum).